Reading from the N-terminus, the 200-residue chain is Ras-related protein Rab-10 (200 aa).

Residues serine 18, glycine 19, valine 20, glycine 21, lysine 22, threonine 23, cysteine 24, asparagine 35, threonine 36, serine 40, and threonine 41 each contribute to the GTP site. Threonine 23 provides a ligand contact to Mg(2+). Short sequence motifs (switch) lie at residues aspartate 32–phenylalanine 46 and aspartate 64–glycine 81. Residues threonine 41 and aspartate 64 each contribute to the Mg(2+) site. Glycine 67 serves as a coordination point for GTP. At threonine 73 the chain carries Phosphothreonine; by LRRK2. Position 102 is an N6-acetyllysine (lysine 102). A Glycyl lysine isopeptide (Lys-Gly) (interchain with G-Cter in ubiquitin) cross-link involves residue lysine 102. The GTP site is built by asparagine 122, lysine 123, aspartate 125, and methionine 126. Lysine 136 participates in a covalent cross-link: Glycyl lysine isopeptide (Lys-Gly) (interchain with G-Cter in ubiquitin). GTP-binding residues include serine 152, alanine 153, and lysine 154. Lysine 154 is covalently cross-linked (Glycyl lysine isopeptide (Lys-Gly) (interchain with G-Cter in ubiquitin)). Residues cysteine 199 and cysteine 200 are each lipidated (S-geranylgeranyl cysteine).

The protein belongs to the small GTPase superfamily. Rab family. In terms of assembly, interacts with MYO5A; mediates the transport to the plasma membrane of SLC2A4/GLUT4 storage vesicles. Interacts with GDI1 and with GDI2; negatively regulates RAB10 association with membranes and activation. Interacts (GDP-bound form) with LLGL1; the interaction is direct and promotes RAB10 association with membranes and activation through competition with the Rab inhibitor GDI1. Interacts with EXOC4; probably associates with the exocyst. Interacts (GTP-bound form) with MICALCL, MICAL1, MICAL3, EHBP1 and EHBP1L1; at least in case of MICAL1 two molecules of RAB10 can bind to one molecule of MICAL1. Interacts with TBC1D13. Interacts with SEC16A. Interacts with CHM and CHML. Interacts with LRRK2; interaction facilitates phosphorylation of Thr-73. Interacts (when phosphorylated on Thr-73) with RILPL1 and RILPL2. Interacts with TBC1D21. Interacts with MARCKS. It depends on Mg(2+) as a cofactor. In terms of processing, ubiquitinated upon Legionella pneumophila infection. Ubiquitination does not lead to proteasomal degradation. Post-translationally, phosphorylation of Thr-73 in the switch II region by LRRK2 prevents the association of dRAB regulatory proteins, including CHM, CHML and RAB GDP dissociation inhibitors GDI1 and GDI2. Phosphorylation of Thr-73 by LRRK2 is stimulated by RAB29 and RAB32. Phosphorylation by LRRK2 is required for localization to stressed lysosomes. In terms of tissue distribution, expressed in the hippocampus. Expressed in neutrophils (at protein level). Expressed in the testis (at protein level).

Its subcellular location is the cytoplasmic vesicle membrane. The protein resides in the golgi apparatus membrane. It localises to the golgi apparatus. It is found in the trans-Golgi network membrane. The protein localises to the endosome membrane. Its subcellular location is the recycling endosome membrane. The protein resides in the cytoplasmic vesicle. It localises to the phagosome membrane. It is found in the cytoplasm. The protein localises to the cytoskeleton. Its subcellular location is the cilium basal body. The protein resides in the endoplasmic reticulum membrane. It localises to the perinuclear region. It is found in the lysosome. It catalyses the reaction GTP + H2O = GDP + phosphate + H(+). Its activity is regulated as follows. Regulated by guanine nucleotide exchange factors (GEFs) DENND4C and RABIF which promote the exchange of bound GDP for free GTP. Regulated by GTPase activating proteins (GAPs) including TBC1D21 which increase the GTP hydrolysis activity. Inhibited by GDP dissociation inhibitors GDI1 and GDI2 which prevent Rab-GDP dissociation. Functionally, the small GTPases Rab are key regulators of intracellular membrane trafficking, from the formation of transport vesicles to their fusion with membranes. Rabs cycle between an inactive GDP-bound form and an active GTP-bound form that is able to recruit to membranes different set of downstream effectors directly responsible for vesicle formation, movement, tethering and fusion. That Rab is mainly involved in the biosynthetic transport of proteins from the Golgi to the plasma membrane. Regulates, for instance, SLC2A4/GLUT4 glucose transporter-enriched vesicles delivery to the plasma membrane. In parallel, it regulates the transport of TLR4, a toll-like receptor to the plasma membrane and therefore may be important for innate immune response. Also plays a specific role in asymmetric protein transport to the plasma membrane. In neurons, it is involved in axonogenesis through regulation of vesicular membrane trafficking toward the axonal plasma membrane. In epithelial cells, it regulates transport from the Golgi to the basolateral membrane. May play a role in the basolateral recycling pathway and in phagosome maturation. May play a role in endoplasmic reticulum dynamics and morphology controlling tubulation along microtubules and tubules fusion. Together with LRRK2, RAB8A, and RILPL1, it regulates ciliogenesis. When phosphorylated by LRRK2 on Thr-73, binds RILPL1 and inhibits ciliogenesis. Participates in the export of a subset of neosynthesized proteins through a Rab8-Rab10-Rab11-dependent endososomal export route. Targeted to and stabilized on stressed lysosomes through LRRK2 phosphorylation where it promotes the extracellular release of lysosomal content through EHBP1 and EHNP1L1 effector proteins. Its function is as follows. (Microbial infection) Upon Legionella pneumophila infection promotes endoplasmic reticulum recruitment and bacterial replication. Plays a role in remodeling the Legionella-containing vacuole (LCV) into an endoplasmic reticulum-like vacuole. The protein is Ras-related protein Rab-10 of Homo sapiens (Human).